Consider the following 366-residue polypeptide: Putative [LysW]-aminoadipate semialdehyde/glutamate semialdehyde transaminase (366 aa).

Residues 90–91 (GT) and Phe117 contribute to the pyridoxal 5'-phosphate site. Arg120 contacts substrate. 202 to 205 (DEVQ) contacts pyridoxal 5'-phosphate. Lys230 bears the N6-(pyridoxal phosphate)lysine mark. Ser254 lines the substrate pocket. A pyridoxal 5'-phosphate-binding site is contributed by Thr255.

This sequence belongs to the class-III pyridoxal-phosphate-dependent aminotransferase family. LysJ subfamily. As to quaternary structure, homodimer. It depends on pyridoxal 5'-phosphate as a cofactor.

Its subcellular location is the cytoplasm. It catalyses the reaction [amino-group carrier protein]-C-terminal-gamma-(L-lysyl)-L-glutamate + 2-oxoglutarate = [amino-group carrier protein]-C-terminal-N-(1-carboxy-5-oxopentan-1-yl)-L-glutamine + L-glutamate. The enzyme catalyses [amino-group carrier protein]-C-terminal-gamma-(L-ornithyl)-L-glutamate + 2-oxoglutarate = [amino-group carrier protein]-C-terminal-gamma-(L-glutamyl-5-semialdehyde)-L-glutamate + L-glutamate. Its pathway is amino-acid biosynthesis; L-lysine biosynthesis via AAA pathway; L-lysine from L-alpha-aminoadipate (Thermus route): step 4/5. It participates in amino-acid biosynthesis; L-arginine biosynthesis. Functionally, involved in both the arginine and lysine biosynthetic pathways. This is Putative [LysW]-aminoadipate semialdehyde/glutamate semialdehyde transaminase from Pyrococcus furiosus (strain ATCC 43587 / DSM 3638 / JCM 8422 / Vc1).